The chain runs to 358 residues: Alanine racemase (358 aa).

Catalysis depends on Lys-35, which acts as the Proton acceptor; specific for D-alanine. Position 35 is an N6-(pyridoxal phosphate)lysine (Lys-35). A substrate-binding site is contributed by Arg-130. Tyr-255 (proton acceptor; specific for L-alanine) is an active-site residue. Substrate is bound at residue Met-303.

This sequence belongs to the alanine racemase family. Pyridoxal 5'-phosphate is required as a cofactor.

The enzyme catalyses L-alanine = D-alanine. The protein operates within amino-acid biosynthesis; D-alanine biosynthesis; D-alanine from L-alanine: step 1/1. Functionally, catalyzes the interconversion of L-alanine and D-alanine. May also act on other amino acids. The chain is Alanine racemase (alr) from Shewanella sediminis (strain HAW-EB3).